Consider the following 844-residue polypeptide: DNA mismatch repair protein MutS (844 aa).

Residue 610 to 617 coordinates ATP; it reads GPNMGGKS.

It belongs to the DNA mismatch repair MutS family.

Functionally, this protein is involved in the repair of mismatches in DNA. It is possible that it carries out the mismatch recognition step. This protein has a weak ATPase activity. The chain is DNA mismatch repair protein MutS from Francisella tularensis subsp. holarctica (strain FTNF002-00 / FTA).